We begin with the raw amino-acid sequence, 607 residues long: Aspartate--tRNA(Asp/Asn) ligase (607 aa).

Glu-194 contributes to the L-aspartate binding site. The tract at residues 218–221 (QLFK) is aspartate. Arg-240 is an L-aspartate binding site. ATP contacts are provided by residues 240 to 242 (RDE) and Gln-249. His-468 contacts L-aspartate. Glu-502 is a binding site for ATP. Residue Arg-509 participates in L-aspartate binding. 554-557 (GLDR) lines the ATP pocket.

This sequence belongs to the class-II aminoacyl-tRNA synthetase family. Type 1 subfamily. As to quaternary structure, homodimer.

The protein resides in the cytoplasm. The catalysed reaction is tRNA(Asx) + L-aspartate + ATP = L-aspartyl-tRNA(Asx) + AMP + diphosphate. Its function is as follows. Aspartyl-tRNA synthetase with relaxed tRNA specificity since it is able to aspartylate not only its cognate tRNA(Asp) but also tRNA(Asn). Reaction proceeds in two steps: L-aspartate is first activated by ATP to form Asp-AMP and then transferred to the acceptor end of tRNA(Asp/Asn). This Desulfotalea psychrophila (strain LSv54 / DSM 12343) protein is Aspartate--tRNA(Asp/Asn) ligase.